Consider the following 490-residue polypeptide: ATP synthase subunit alpha 1 (490 aa).

The protein belongs to the ATPase alpha/beta chains family. F-type ATPases have 2 components, CF(1) - the catalytic core - and CF(0) - the membrane proton channel. CF(1) has five subunits: alpha(3), beta(3), gamma(1), delta(1), epsilon(1). CF(0) has three main subunits: a(1), b(2) and c(9-12). The alpha and beta chains form an alternating ring which encloses part of the gamma chain. CF(1) is attached to CF(0) by a central stalk formed by the gamma and epsilon chains, while a peripheral stalk is formed by the delta and b chains.

Its subcellular location is the cell inner membrane. It carries out the reaction ATP + H2O + 4 H(+)(in) = ADP + phosphate + 5 H(+)(out). Its function is as follows. Produces ATP from ADP in the presence of a proton gradient across the membrane. The alpha chain is a regulatory subunit. In Legionella pneumophila (strain Paris), this protein is ATP synthase subunit alpha 1.